Reading from the N-terminus, the 293-residue chain is 4-hydroxy-tetrahydrodipicolinate synthase (293 aa).

Thr-45 lines the pyruvate pocket. Tyr-133 acts as the Proton donor/acceptor in catalysis. Catalysis depends on Lys-161, which acts as the Schiff-base intermediate with substrate. Val-203 contacts pyruvate.

It belongs to the DapA family. In terms of assembly, homotetramer; dimer of dimers.

It is found in the cytoplasm. The catalysed reaction is L-aspartate 4-semialdehyde + pyruvate = (2S,4S)-4-hydroxy-2,3,4,5-tetrahydrodipicolinate + H2O + H(+). Its pathway is amino-acid biosynthesis; L-lysine biosynthesis via DAP pathway; (S)-tetrahydrodipicolinate from L-aspartate: step 3/4. Functionally, catalyzes the condensation of (S)-aspartate-beta-semialdehyde [(S)-ASA] and pyruvate to 4-hydroxy-tetrahydrodipicolinate (HTPA). In Exiguobacterium sp. (strain ATCC BAA-1283 / AT1b), this protein is 4-hydroxy-tetrahydrodipicolinate synthase.